A 507-amino-acid chain; its full sequence is WD-40 repeat-containing protein MSI4 (507 aa).

The residue at position 1 (methionine 1) is an N-acetylmethionine. Positions 1 to 66 are disordered; that stretch reads MESDEAAAVS…KTQQSPSVDE (66 aa). WD repeat units follow at residues 95–137, 162–202, and 217–257; these read RWGP…KPRV, IHPG…NRHA, and GHQD…TTIG. The segment covering 258–272 has biased composition (polar residues); that stretch reads TDSKSSGSIIKQTGE. The segment at 258–282 is disordered; it reads TDSKSSGSIIKQTGEGTDKNESPTV. WD repeat units follow at residues 290-330, 335-375, 384-424, and 439-486; these read GHED…NPVT, AHDA…ANGV, GHKA…KKSD, and GHRD…YRPE. The DWD box motif lies at 308–323; sequence FCSVGDDSCLILWDAR.

Belongs to the WD repeat RBAP46/RBAP48/MSI1 family. In terms of assembly, interacts with AHL16 and HOS1. Interacts with LHP1, PDP1, PDP2 and PDP3. Component of the PRC2 (polycomb repressive complex 2) complex which regulates histone methylation on histone H3K27. In terms of tissue distribution, expressed in rosette leaves, cauline leaves, main stems and developing fruits. Expressed at higher levels in roots and flowers.

Its subcellular location is the nucleus. Functionally, core histone-binding subunit that may target chromatin assembly factors, chromatin remodeling factors and histone deacetylases to their histone substrates in a manner that is regulated by nucleosomal DNA. Component of the flowering autonomous pathway which positively regulates flowering by promoting transcriptional repression of the flowering repressor FLC. May promote histone deacetylation at the FLC locus leading to the formation of repressive chromatin structures. Forms a histone deacetylase complex with HDA5, HDA6 and FLD that represses FLC gene expression to control flowering time. Also negatively regulates cold-responsive genes. Acts together with PDP1 and MSI5 to regulate the function of the PRC2 complex on FLC. Required for systemic acquired resistance (SAR) toward pathogenic bacteria (e.g. Pseudomonas syringae pv tomato DC3000 (avrPto)). Together with FLD and MSI4/FVE, contributes to dehydroabietinal-dependent (DA, a diterpenoid tricyclic diterpene) activation of flowering ans SAR. This chain is WD-40 repeat-containing protein MSI4, found in Arabidopsis thaliana (Mouse-ear cress).